The sequence spans 163 residues: Olfactory marker protein (163 aa).

Alanine 2 carries the post-translational modification N-acetylalanine.

Belongs to the olfactory marker protein family. In terms of assembly, interacts with BEX1 and BEX2. Uniquely associated with mature olfactory receptor neurons.

The protein resides in the cytoplasm. In terms of biological role, may act as a modulator of the olfactory signal-transduction cascade. This Rattus norvegicus (Rat) protein is Olfactory marker protein (Omp).